Reading from the N-terminus, the 475-residue chain is Ankyrin repeat, SAM and basic leucine zipper domain-containing protein 1 (475 aa).

Low complexity predominate over residues 1–10 (MAAGRLRGLA). The tract at residues 1-24 (MAAGRLRGLAVAGGGESSESDDDG) is disordered. Phosphoserine is present on residues Ser-17, Ser-18, and Ser-20. ANK repeat units lie at residues 45–74 (EKNE…SVDS), 78–107 (YGWT…NANF), 110–144 (DKQT…DPNV), 148–177 (RLMT…EVNT), 181–210 (SGYT…DKML), and 214–243 (DGNI…PLKG). Positions 272–334 (SYTAFGDLEV…KILAALKELD (63 aa)) constitute an SAM domain.

As to quaternary structure, interacts with DDX4, PIWIL1, RANBP9 and TDRD1.

It localises to the cytoplasm. Plays a central role during spermatogenesis by repressing transposable elements and preventing their mobilization, which is essential for the germline integrity. Acts via the piRNA metabolic process, which mediates the repression of transposable elements during meiosis by forming complexes composed of piRNAs and Piwi proteins and governs the methylation and subsequent repression of transposons. Its association with pi-bodies suggests a participation in the primary piRNAs metabolic process. Required prior to the pachytene stage to facilitate the production of multiple types of piRNAs, including those associated with repeats involved in the regulation of retrotransposons. May act by mediating protein-protein interactions during germ cell maturation. This is Ankyrin repeat, SAM and basic leucine zipper domain-containing protein 1 (ASZ1) from Carollia perspicillata (Seba's short-tailed bat).